The sequence spans 672 residues: Protein OS-9 (672 aa).

An N-terminal signal peptide occupies residues 1-26; that stretch reads MAAEVLLSSLLGLLFLGLLLPARLTG. Positions 108 to 230 constitute an MRH domain; that stretch reads APCLLKTKDW…TIRTSRLCPH (123 aa). Cys110 and Cys123 are disulfide-bonded. 3 residues coordinate a mannooligosaccharide derivative: Trp117, Trp118, and Gln130. Asn177 carries N-linked (GlcNAc...) asparagine glycosylation. 2 disulfides stabilise this stretch: Cys181–Cys216 and Cys196–Cys228. A mannooligosaccharide derivative is bound by residues Asp182, Arg188, Glu212, and Tyr218. Disordered regions lie at residues 261–355, 372–452, 511–548, and 637–672; these read RQAE…NVQV, KAAE…LLPS, ENQSPELVQKYKKRRVVPQKPPPSPHPTEEEPEHRVRV, and EANKERQRQSELESNYRRVWGSPGGEDTGDLDEFDF. 5 stretches are compositionally biased toward basic and acidic residues: residues 263–281, 294–310, 320–338, 372–386, and 394–409; these read AESKQHEEKTTEEVQDTDR, PKKEDVSPAKEEKESEL, AAAREEAQAGEQDLNHEAA, KAAEKGKPSVRREQP, and PQREAEGTKAKGKDGE. Positions 414 to 435 are enriched in acidic residues; that stretch reads MEEEDGDDEEEEEEEEEDEEEQ. Positions 637-652 are enriched in basic and acidic residues; it reads EANKERQRQSELESNY. The span at 663 to 672 shows a compositional bias: acidic residues; the sequence is DTGDLDEFDF.

Belongs to the OS-9 family. As to quaternary structure, component of the HRD1 complex, which comprises at least SYNV1/HRD1, DERL1/2, FAM8A1, HERPUD1/HERP, OS9, SEL1L and UBE2J1. FAM8A1 is stabilized by interaction with SYNV1, which prevents its proteasomal degradation. OS9 and UBE2J1 recruitment to the complex may be mediated by SEL1L. Through this complex, may interact with ERLEC1 and HSPA5. Interacts (via C-terminus) with CPNE6 (via second C2 domain); this interaction occurs in a calcium-dependent manner in vitro. Interacts with CREB3. In terms of processing, N-glycosylated. Post-translationally, intramolecular disulfide bonds.

The protein resides in the endoplasmic reticulum lumen. Lectin component of the HRD1 complex, which functions in endoplasmic reticulum (ER) quality control and ER-associated degradation (ERAD). Specifically recognizes and binds improperly folded glycoproteins as well as hyperglycosylated proteins, retain them in the ER, and transfers them to the ubiquitination machinery and promote their degradation. Possible targets include TRPV4 as well as hyperglycosylated HSP90B1. In Mus musculus (Mouse), this protein is Protein OS-9 (Os9).